A 716-amino-acid polypeptide reads, in one-letter code: Eosinophil peroxidase (716 aa).

The N-terminal stretch at 1 to 18 (MMQQLLALVGALATLILT) is a signal peptide. A propeptide spanning residues 19-140 (QHAEGTAPAS…SGCALQDQAE (122 aa)) is cleaved from the precursor. Residues Asn-53 and Asn-114 are each glycosylated (N-linked (GlcNAc...) asparagine). A disulfide bridge links Cys-142 with Cys-153. Position 233 (Asp-233) interacts with heme b. The Proton acceptor role is filled by His-234. Asp-235 serves as a coordination point for Ca(2+). 2 disulfide bridges follow: Cys-254–Cys-264 and Cys-258–Cys-282. Residues Thr-307, Phe-309, Asp-311, and Ser-313 each coordinate Ca(2+). Asn-328 and Asn-364 each carry an N-linked (GlcNAc...) asparagine glycan. A disulfide bridge links Cys-360 with Cys-371. 2 residues coordinate heme b: Glu-381 and His-475. Tyr-489 is subject to 3'-nitrotyrosine. Intrachain disulfides connect Cys-579/Cys-636 and Cys-677/Cys-702. Residue Asn-709 is glycosylated (N-linked (GlcNAc...) asparagine).

The protein belongs to the peroxidase family. XPO subfamily. As to quaternary structure, tetramer of two light chains and two heavy chains. The cofactor is Ca(2+). Heme b is required as a cofactor.

The protein localises to the cytoplasmic granule. The catalysed reaction is 2 a phenolic donor + H2O2 = 2 a phenolic radical donor + 2 H2O. In terms of biological role, mediates tyrosine nitration of secondary granule proteins in mature resting eosinophils. The chain is Eosinophil peroxidase (Epx) from Mus musculus (Mouse).